The following is a 287-amino-acid chain: Uroplakin-3a (287 aa).

A signal peptide spans Met1–Thr18. The Lumenal portion of the chain corresponds to Val19 to Gly207. Residues Asn74, Asn139, and Asn170 are each glycosylated (N-linked (GlcNAc...) asparagine). A helical membrane pass occupies residues Met208–Val235. Over Asp236–Asp287 the chain is Cytoplasmic. The tract at residues Glu243–Asp287 is disordered. Residues Leu259 to Asn270 are compositionally biased toward polar residues.

Belongs to the uroplakin-3 family. As to quaternary structure, heterodimer with uroplakin-1B (UPK1B).

The protein resides in the endoplasmic reticulum membrane. Its function is as follows. Component of the asymmetric unit membrane (AUM); a highly specialized biomembrane elaborated by terminally differentiated urothelial cells. May play an important role in AUM-cytoskeleton interaction in terminally differentiated urothelial cells. It also contributes to the formation of urothelial glycocalyx which may play an important role in preventing bacterial adherence. This chain is Uroplakin-3a (Upk3a), found in Mus musculus (Mouse).